Reading from the N-terminus, the 291-residue chain is Small ribosomal subunit protein uS2 (291 aa).

Residues 270–291 (NINEEANTEFEQALSDADEDKN) form a disordered region.

Belongs to the universal ribosomal protein uS2 family.

This is Small ribosomal subunit protein uS2 from Rickettsia bellii (strain OSU 85-389).